Here is a 196-residue protein sequence, read N- to C-terminus: GTP cyclohydrolase-2 (196 aa).

A GTP-binding site is contributed by 49–53 (RVHSE). Residues Cys54, Cys65, and Cys67 each coordinate Zn(2+). GTP is bound by residues Gln70, 92–94 (EGR), and Thr114. Asp126 acts as the Proton acceptor in catalysis. Arg128 (nucleophile) is an active-site residue. Residues Thr149 and Lys154 each coordinate GTP.

The protein belongs to the GTP cyclohydrolase II family. As to quaternary structure, homodimer. It depends on Zn(2+) as a cofactor.

The enzyme catalyses GTP + 4 H2O = 2,5-diamino-6-hydroxy-4-(5-phosphoribosylamino)-pyrimidine + formate + 2 phosphate + 3 H(+). The protein operates within cofactor biosynthesis; riboflavin biosynthesis; 5-amino-6-(D-ribitylamino)uracil from GTP: step 1/4. Its function is as follows. Catalyzes the conversion of GTP to 2,5-diamino-6-ribosylamino-4(3H)-pyrimidinone 5'-phosphate (DARP), formate and pyrophosphate. This is GTP cyclohydrolase-2 from Salmonella choleraesuis (strain SC-B67).